The chain runs to 369 residues: Protein V (369 aa).

Disordered stretches follow at residues 1-24 (MDQD…GRES) and 38-320 (SEPT…GHRR). The segment covering 7 to 20 (ISKEDSEVEREASG) has biased composition (basic and acidic residues). Polar residues predominate over residues 50–61 (LHNTINTLQRPG). Basic and acidic residues-rich tracts occupy residues 99–110 (AEAHARNVDKQN) and 150–168 (GAED…RGED). S249, S257, and S260 each carry phosphoserine; by host. Zn(2+) contacts are provided by H318, C337, C341, C353, C355, C358, C362, and C365.

Belongs to the paramyxoviruses V protein family. Interacts with host IFIH1/MDA5 and DHX58/LGP2. Interacts with host IRF3. Interacts with host RIGI regulatory protein (via CARDs domain) and host TRIM25 (via SPRY domain); these interactions prevent TRIM25-mediated ubiquitination of RIG-I and disrupts downstream RIG-I signaling.

Its subcellular location is the host cytoplasm. Its function is as follows. Plays an essential role in the inhibition of host immune response. Prevents the establishment of cellular antiviral state by blocking interferon-alpha/beta (IFN-alpha/beta) production and signaling pathway. Interacts with host IFIH1/MDA5 and DHX58/LGP2 to inhibit the transduction pathway involved in the activation of IFN-beta promoter, thus protecting the virus against cell antiviral state. Also interacts with and inhibits host IRF3. Blocks the type I interferon signaling pathway by disrupting the RIG-I signaling pathway. The polypeptide is Protein V (P/V/C) (Sendai virus (strain Hamamatsu) (SeV)).